The following is a 247-amino-acid chain: Carboxy-S-adenosyl-L-methionine synthase (247 aa).

S-adenosyl-L-methionine is bound by residues Y39, 64–66, 89–90, 117–118, N132, and R199; these read GCS, DN, and DI.

Belongs to the class I-like SAM-binding methyltransferase superfamily. Cx-SAM synthase family. In terms of assembly, homodimer.

The enzyme catalyses prephenate + S-adenosyl-L-methionine = carboxy-S-adenosyl-L-methionine + 3-phenylpyruvate + H2O. Functionally, catalyzes the conversion of S-adenosyl-L-methionine (SAM) to carboxy-S-adenosyl-L-methionine (Cx-SAM). The sequence is that of Carboxy-S-adenosyl-L-methionine synthase from Shigella sonnei (strain Ss046).